The chain runs to 797 residues: N-acetylneuraminate (7)9-O-acetyltransferase (797 aa).

Residues M1–S18 are Cytoplasmic-facing. Residues V19–A39 form a helical membrane-spanning segment. The Lumenal portion of the chain corresponds to S40 to Q313. N46 carries N-linked (GlcNAc...) asparagine glycosylation. Residue S94 is the Acyl-ester intermediate of the active site. N175 and N187 each carry an N-linked (GlcNAc...) asparagine glycan. Active-site residues include D270 and H273. The helical transmembrane segment at K314–H334 threads the bilayer. Residues R335–S363 are Cytoplasmic-facing. The chain crosses the membrane as a helical span at residues L364–C384. At D385–K395 the chain is on the lumenal side. Residues F396–Y416 form a helical membrane-spanning segment. The Cytoplasmic portion of the chain corresponds to N417–Q439. Residues L440–I460 form a helical membrane-spanning segment. A topological domain (lumenal) is located at residue R461. A helical transmembrane segment spans residues V462–K482. At G483 to G486 the chain is on the cytoplasmic side. Residues I487–V507 traverse the membrane as a helical segment. Residues M508–Q513 lie on the Lumenal side of the membrane. A helical transmembrane segment spans residues F514–L534. Residues W535–C547 lie on the Cytoplasmic side of the membrane. Residues F548–A568 form a helical membrane-spanning segment. At Y569–Y605 the chain is on the lumenal side. The chain crosses the membrane as a helical span at residues V606–L626. The Cytoplasmic portion of the chain corresponds to S627–K638. Residues I639–S659 form a helical membrane-spanning segment. Over S660–H671 the chain is Lumenal. Residues P672–A692 traverse the membrane as a helical segment. Over R693 to S698 the chain is Cytoplasmic. Residues F699 to L719 traverse the membrane as a helical segment. At A720–G725 the chain is on the lumenal side. A helical membrane pass occupies residues I726–V746. The Cytoplasmic portion of the chain corresponds to C747–S770. A helical transmembrane segment spans residues L771–I791. Topologically, residues Q792–H797 are lumenal.

Belongs to the PC-esterase family. CASD1 subfamily. Post-translationally, N-glycosylated. Highly expressed in peripheral B lymphocytes.

It is found in the golgi apparatus membrane. The enzyme catalyses CMP-N-acetyl-beta-neuraminate + acetyl-CoA = CMP-N-acetyl-9-O-acetyl-beta-neuraminate + CoA. It catalyses the reaction a ganglioside GD3 (d18:1(4E)) + acetyl-CoA = a ganglioside Ac-O-7-GD3(d18:1(4E)) + CoA. It carries out the reaction CMP-N-acetyl-beta-neuraminate + acetyl-CoA = CMP-N-acetyl-7-O-acetyl-beta-neuraminate + CoA. In terms of biological role, key enzyme in the biosynthesis of O-acetylated (O-Ac) sialoglycans such as gangliosides O-AcGD3 and O-AcGD2, which affect various processes such as cell-cell interactions, host-pathogen recognition. Catalyzes the transfer of an acetyl group from a donor, the acetyl-coenzyme-A molecule (acetyl-CoA), to the C7/8/9 OH-position of a sialic acid residue. The primary site of O-acetyl group transfer on sialic acid seems to depend on cell type and can be C7, from which the O-acetyl group could subsequently migrate to the C8 and then to the C9 position, or at C9 with possibility of migrating to the C8 and then to the C7 position. Together with ST8SIA1 (GD3 synthase) it increases the levels of ganglioside Ac-O-7-GD3. Can transfer the acetyl group from acetyl-CoA to free sialate (N-acetylneuraminate, Neu5Ac) in vitro, but has preferred substrate specificity for CMP-activated sialate (CMP-Neu5Ac), resulting in the formation of 9-O-acetylated CMP-Neu5Ac (CMP-Neu5,9Ac2). CMP-Neu5,9Ac2 may be used by sialyltransferases as a sialate donor for glycoconjugate acceptors such as ganglioside GD3. O-acetylation at position C9 of ganglioside GD3 can counteract the pro-apoptotic effects of the ganglioside GD3 in tumor cells. The protein is N-acetylneuraminate (7)9-O-acetyltransferase of Homo sapiens (Human).